Reading from the N-terminus, the 180-residue chain is Free methionine-R-sulfoxide reductase (180 aa).

A GAF domain is found at 99–177 (GVCGTAASTK…KLAKLINKSC (79 aa)).

It belongs to the free Met sulfoxide reductase family.

It localises to the cytoplasm. The protein localises to the nucleus. It carries out the reaction [thioredoxin]-disulfide + L-methionine + H2O = L-methionine (R)-S-oxide + [thioredoxin]-dithiol. In terms of biological role, catalyzes the reversible oxidation-reduction of the R-enantiomer of free methionine sulfoxide to methionine. Does not act on S-enantiomer of free methionine sulfoxide or R-enantiomer of dabsylated methionine sulfoxide. Involved in protection against oxidative stress. The chain is Free methionine-R-sulfoxide reductase from Saccharomyces cerevisiae (strain ATCC 204508 / S288c) (Baker's yeast).